The primary structure comprises 506 residues: Mitogen-activated protein kinase 13 (506 aa).

The Protein kinase domain occupies 13-304; sequence YQIQEVVGKG…AEEALADPYF (292 aa). Residues 19 to 27 and lysine 42 contribute to the ATP site; that span reads VGKGSYGVV. Aspartate 139 (proton acceptor) is an active-site residue. At threonine 175 the chain carries Phosphothreonine. Residues 175–177 carry the TXY motif; that stretch reads TDY. Tyrosine 177 carries the phosphotyrosine modification. A disordered region spans residues 384–421; the sequence is YSRGERSTPLRRQHASLPRERVCSSVDSNNQDSDNEER.

This sequence belongs to the protein kinase superfamily. CMGC Ser/Thr protein kinase family. MAP kinase subfamily. Dually phosphorylated on Thr-175 and Tyr-177, which activates the enzyme.

The enzyme catalyses L-seryl-[protein] + ATP = O-phospho-L-seryl-[protein] + ADP + H(+). It carries out the reaction L-threonyl-[protein] + ATP = O-phospho-L-threonyl-[protein] + ADP + H(+). Activated by threonine and tyrosine phosphorylation. This Oryza sativa subsp. indica (Rice) protein is Mitogen-activated protein kinase 13 (MPK13).